Consider the following 77-residue polypeptide: Acyl carrier protein (77 aa).

The region spanning 2–77 is the Carrier domain; sequence STVEERVKKI…DAIDYILANQ (76 aa). Ser37 bears the O-(pantetheine 4'-phosphoryl)serine mark.

This sequence belongs to the acyl carrier protein (ACP) family. 4'-phosphopantetheine is transferred from CoA to a specific serine of apo-ACP by AcpS. This modification is essential for activity because fatty acids are bound in thioester linkage to the sulfhydryl of the prosthetic group.

It is found in the cytoplasm. Its pathway is lipid metabolism; fatty acid biosynthesis. Functionally, carrier of the growing fatty acid chain in fatty acid biosynthesis. The polypeptide is Acyl carrier protein (Hahella chejuensis (strain KCTC 2396)).